A 264-amino-acid polypeptide reads, in one-letter code: Putative hydro-lyase cgR_2449 (264 aa).

This sequence belongs to the D-glutamate cyclase family.

This chain is Putative hydro-lyase cgR_2449, found in Corynebacterium glutamicum (strain R).